The primary structure comprises 80 residues: Exodeoxyribonuclease 7 small subunit (80 aa).

This sequence belongs to the XseB family. In terms of assembly, heterooligomer composed of large and small subunits.

The protein resides in the cytoplasm. The catalysed reaction is Exonucleolytic cleavage in either 5'- to 3'- or 3'- to 5'-direction to yield nucleoside 5'-phosphates.. In terms of biological role, bidirectionally degrades single-stranded DNA into large acid-insoluble oligonucleotides, which are then degraded further into small acid-soluble oligonucleotides. This Lactobacillus helveticus (strain DPC 4571) protein is Exodeoxyribonuclease 7 small subunit.